Reading from the N-terminus, the 321-residue chain is Olfactory receptor 51G1 (321 aa).

Over Met-1 to Gly-27 the chain is Extracellular. Asn-6 carries an N-linked (GlcNAc...) asparagine glycan. A helical transmembrane segment spans residues Trp-28 to Leu-48. Topologically, residues His-49–Thr-56 are cytoplasmic. A helical membrane pass occupies residues Leu-57–Leu-77. Over Ser-78 to Thr-101 the chain is Extracellular. A disulfide bridge connects residues Cys-99 and Cys-191. Residues Gln-102–Ile-122 form a helical membrane-spanning segment. Over Asp-123–Ala-141 the chain is Cytoplasmic. A helical membrane pass occupies residues Cys-142 to Pro-162. Residues Phe-163–His-198 are Extracellular-facing. A helical membrane pass occupies residues Ile-199–Ser-219. Residues Tyr-220–Ala-239 are Cytoplasmic-facing. A helical membrane pass occupies residues Leu-240 to Leu-260. Topologically, residues Ser-261–His-275 are extracellular. The chain crosses the membrane as a helical span at residues Leu-276–Ile-296. Over Lys-297–Asp-321 the chain is Cytoplasmic.

Belongs to the G-protein coupled receptor 1 family.

The protein localises to the cell membrane. Its function is as follows. Odorant receptor. The protein is Olfactory receptor 51G1 (OR51G1) of Homo sapiens (Human).